Here is a 161-residue protein sequence, read N- to C-terminus: MARQKKYSGKGGARKKNKQKQSVAPRRRVEFKYKGFTLEELQEMPIKKFMEIVPSRQRRTMLRGITPNQRKLVMKIKKARRLTNRGKEPRVIRTHCRDFVITPEMIGLTFGIYNGKEFKEIKLVEETVGRFLGEMAPTRSVVQHGSPGMGATRGSMFVPIK.

The span at 1 to 19 (MARQKKYSGKGGARKKNKQ) shows a compositional bias: basic residues. The segment at 1–26 (MARQKKYSGKGGARKKNKQKQSVAPR) is disordered.

Belongs to the universal ribosomal protein uS19 family.

Functionally, protein S19 forms a complex with S13 that binds strongly to the 16S ribosomal RNA. This is Small ribosomal subunit protein uS19 from Methanococcus maripaludis (strain C7 / ATCC BAA-1331).